The primary structure comprises 365 residues: 3-dehydroquinate synthase (365 aa).

NAD(+) contacts are provided by residues Gly-106–Asp-110, Thr-130–Thr-131, Lys-142, Lys-151, and Phe-169–Thr-172. Zn(2+)-binding residues include Glu-184, His-247, and His-264.

It belongs to the sugar phosphate cyclases superfamily. Dehydroquinate synthase family. Co(2+) serves as cofactor. It depends on Zn(2+) as a cofactor. NAD(+) is required as a cofactor.

It is found in the cytoplasm. The enzyme catalyses 7-phospho-2-dehydro-3-deoxy-D-arabino-heptonate = 3-dehydroquinate + phosphate. It functions in the pathway metabolic intermediate biosynthesis; chorismate biosynthesis; chorismate from D-erythrose 4-phosphate and phosphoenolpyruvate: step 2/7. Catalyzes the conversion of 3-deoxy-D-arabino-heptulosonate 7-phosphate (DAHP) to dehydroquinate (DHQ). This chain is 3-dehydroquinate synthase, found in Listeria monocytogenes serotype 4a (strain HCC23).